A 278-amino-acid polypeptide reads, in one-letter code: Formamidopyrimidine-DNA glycosylase (278 aa).

P2 (schiff-base intermediate with DNA) is an active-site residue. The Proton donor role is filled by E3. Catalysis depends on K58, which acts as the Proton donor; for beta-elimination activity. The DNA site is built by H91, R109, and R158. The segment at 243 to 277 (KVYDRKGLPCKVCKTPISQMVQGQRTTYFCSQCQK) adopts an FPG-type zinc-finger fold. Catalysis depends on R267, which acts as the Proton donor; for delta-elimination activity.

It belongs to the FPG family. In terms of assembly, monomer. Zn(2+) serves as cofactor.

It carries out the reaction Hydrolysis of DNA containing ring-opened 7-methylguanine residues, releasing 2,6-diamino-4-hydroxy-5-(N-methyl)formamidopyrimidine.. The enzyme catalyses 2'-deoxyribonucleotide-(2'-deoxyribose 5'-phosphate)-2'-deoxyribonucleotide-DNA = a 3'-end 2'-deoxyribonucleotide-(2,3-dehydro-2,3-deoxyribose 5'-phosphate)-DNA + a 5'-end 5'-phospho-2'-deoxyribonucleoside-DNA + H(+). Involved in base excision repair of DNA damaged by oxidation or by mutagenic agents. Acts as a DNA glycosylase that recognizes and removes damaged bases. Has a preference for oxidized purines, such as 7,8-dihydro-8-oxoguanine (8-oxoG). Has AP (apurinic/apyrimidinic) lyase activity and introduces nicks in the DNA strand. Cleaves the DNA backbone by beta-delta elimination to generate a single-strand break at the site of the removed base with both 3'- and 5'-phosphates. In Polynucleobacter necessarius subsp. necessarius (strain STIR1), this protein is Formamidopyrimidine-DNA glycosylase.